Reading from the N-terminus, the 483-residue chain is Glutamyl-tRNA(Gln) amidotransferase subunit A (483 aa).

Residues Lys-75 and Ser-150 each act as charge relay system in the active site. Ser-174 functions as the Acyl-ester intermediate in the catalytic mechanism.

It belongs to the amidase family. GatA subfamily. In terms of assembly, heterotrimer of A, B and C subunits.

It carries out the reaction L-glutamyl-tRNA(Gln) + L-glutamine + ATP + H2O = L-glutaminyl-tRNA(Gln) + L-glutamate + ADP + phosphate + H(+). Allows the formation of correctly charged Gln-tRNA(Gln) through the transamidation of misacylated Glu-tRNA(Gln) in organisms which lack glutaminyl-tRNA synthetase. The reaction takes place in the presence of glutamine and ATP through an activated gamma-phospho-Glu-tRNA(Gln). In Gloeothece citriformis (strain PCC 7424) (Cyanothece sp. (strain PCC 7424)), this protein is Glutamyl-tRNA(Gln) amidotransferase subunit A.